Here is a 441-residue protein sequence, read N- to C-terminus: Arginine biosynthesis bifunctional protein ArgJ, mitochondrial (441 aa).

The N-terminal 8 residues, 1–8 (MRISSTLL), are a transit peptide targeting the mitochondrion. Positions 177, 204, 215, 301, 436, and 441 each coordinate substrate. The Nucleophile role is filled by T215.

This sequence belongs to the ArgJ family. As to quaternary structure, heterodimer of an alpha and a beta chain. Post-translationally, the alpha and beta chains are autoproteolytically processed from a single precursor protein within the mitochondrion.

The protein resides in the mitochondrion matrix. The catalysed reaction is N(2)-acetyl-L-ornithine + L-glutamate = N-acetyl-L-glutamate + L-ornithine. It carries out the reaction L-glutamate + acetyl-CoA = N-acetyl-L-glutamate + CoA + H(+). Its pathway is amino-acid biosynthesis; L-arginine biosynthesis; L-ornithine and N-acetyl-L-glutamate from L-glutamate and N(2)-acetyl-L-ornithine (cyclic): step 1/1. It participates in amino-acid biosynthesis; L-arginine biosynthesis; N(2)-acetyl-L-ornithine from L-glutamate: step 1/4. Inhibited by ornithine. Catalyzes two activities which are involved in the cyclic version of arginine biosynthesis: the synthesis of acetylglutamate from glutamate and acetyl-CoA, and of ornithine by transacetylation between acetylornithine and glutamate. The chain is Arginine biosynthesis bifunctional protein ArgJ, mitochondrial from Saccharomyces cerevisiae (strain ATCC 204508 / S288c) (Baker's yeast).